We begin with the raw amino-acid sequence, 361 residues long: Tegument protein UL51 homolog (361 aa).

Cys-8 carries the S-palmitoyl cysteine; by host lipid modification. The tract at residues 251–299 is disordered; the sequence is GDEEDEVTVMSPSPEPVQQQPPVEPVQQQPQGRGSHRRRYKESAPQETL. Residues 266–281 show a composition bias toward low complexity; the sequence is PVQQQPPVEPVQQQPQ.

Belongs to the herpesviridae UL51 family. In terms of assembly, oligomerizes. Interacts with UL103; this interaction mediates UL103 incorporation to virions. Phosphorylated. Post-translationally, palmitoylation is necessary for Golgi localization.

It is found in the virion tegument. Its subcellular location is the host cytoplasm. The protein localises to the host Golgi apparatus. Its function is as follows. Plays several roles during the time course of infection, including egress of virus particles from the perinuclear space and secondary envelopment of cytoplasmic capsids that bud into specific trans-Golgi network (TGN)-derived membranes. This is Tegument protein UL51 homolog (UL71) from Homo sapiens (Human).